The chain runs to 144 residues: Transcription antitermination protein NusB (144 aa).

It belongs to the NusB family.

Its function is as follows. Involved in transcription antitermination. Required for transcription of ribosomal RNA (rRNA) genes. Binds specifically to the boxA antiterminator sequence of the ribosomal RNA (rrn) operons. In Haemophilus influenzae (strain PittEE), this protein is Transcription antitermination protein NusB.